The primary structure comprises 315 residues: MNPNFLDFEQPIADLQAKIEELRLVGNDNSLNIGDEISRLQDKSKTLTESIFGNLTSWQIARMARHPRRPYTLDYIENIFTEFDELHGDRHFSDDAAIVGGIARLDNQPVMVIGHQKGREVREKVRRNFGMPRPEGYRKACRLMEMAERFKMPILTFIDTPGAYPGIDAEERNQSEAIAWNLRVMARLKTPIIATVIGEGGSGGALAIGVCDQLNMLQYSTYAVISPEGCASILWKTAEKAPDAAEAMGITADRLKGLGIVDKVIAEPLGGAHRDPVAAAALIREELSSQLAMLKEFDNDELLARRYDRLMSYGL.

The CoA carboxyltransferase C-terminal domain occupies 40–293 (LQDKSKTLTE…REELSSQLAM (254 aa)).

It belongs to the AccA family. In terms of assembly, acetyl-CoA carboxylase is a heterohexamer composed of biotin carboxyl carrier protein (AccB), biotin carboxylase (AccC) and two subunits each of ACCase subunit alpha (AccA) and ACCase subunit beta (AccD).

The protein resides in the cytoplasm. It carries out the reaction N(6)-carboxybiotinyl-L-lysyl-[protein] + acetyl-CoA = N(6)-biotinyl-L-lysyl-[protein] + malonyl-CoA. It participates in lipid metabolism; malonyl-CoA biosynthesis; malonyl-CoA from acetyl-CoA: step 1/1. In terms of biological role, component of the acetyl coenzyme A carboxylase (ACC) complex. First, biotin carboxylase catalyzes the carboxylation of biotin on its carrier protein (BCCP) and then the CO(2) group is transferred by the carboxyltransferase to acetyl-CoA to form malonyl-CoA. This chain is Acetyl-coenzyme A carboxylase carboxyl transferase subunit alpha, found in Pseudomonas syringae pv. syringae (strain B728a).